The chain runs to 176 residues: Flavodoxin (176 aa).

The region spanning 4–165 (IGIFFGSDTG…RVEKWVKQVA (162 aa)) is the Flavodoxin-like domain.

It belongs to the flavodoxin family. It depends on FMN as a cofactor.

Functionally, low-potential electron donor to a number of redox enzymes. The protein is Flavodoxin (fldA) of Klebsiella pneumoniae.